Consider the following 346-residue polypeptide: Very-long-chain 3-oxoacyl-CoA reductase (346 aa).

The chain crosses the membrane as a helical span at residues 26–46 (GASALLAAGSLFVVSRALVFV). 8 residues coordinate NADP(+): valine 71, aspartate 126, aspartate 134, asparagine 153, tyrosine 220, lysine 224, isoleucine 253, and serine 255. Tyrosine 220 (proton donor) is an active-site residue. Lysine 224 serves as the catalytic Lowers pKa of active site Tyr.

Belongs to the short-chain dehydrogenases/reductases (SDR) family.

The protein localises to the endoplasmic reticulum membrane. It carries out the reaction a very-long-chain (3R)-3-hydroxyacyl-CoA + NADP(+) = a very-long-chain 3-oxoacyl-CoA + NADPH + H(+). It functions in the pathway lipid metabolism; fatty acid biosynthesis. Component of the microsomal membrane bound fatty acid elongation system, which produces the 26-carbon very long-chain fatty acids (VLCFA) from palmitate. Catalyzes the reduction of the 3-ketoacyl-CoA intermediate that is formed in each cycle of fatty acid elongation. VLCFAs serve as precursors for ceramide and sphingolipids. In Aspergillus niger (strain ATCC MYA-4892 / CBS 513.88 / FGSC A1513), this protein is Very-long-chain 3-oxoacyl-CoA reductase.